We begin with the raw amino-acid sequence, 385 residues long: Protein-glutamate methylesterase/protein-glutamine glutaminase (385 aa).

Residue Asp53 is modified to 4-aspartylphosphate. Positions 196–385 (KHKTGKIIVV…EIADHVLRRS (190 aa)) constitute a CheB-type methylesterase domain. Catalysis depends on residues Ser208, His234, and Asp330.

It belongs to the CheB family. Post-translationally, phosphorylated by CheA. Phosphorylation of the N-terminal regulatory domain activates the methylesterase activity.

Its subcellular location is the cytoplasm. The enzyme catalyses [protein]-L-glutamate 5-O-methyl ester + H2O = L-glutamyl-[protein] + methanol + H(+). The catalysed reaction is L-glutaminyl-[protein] + H2O = L-glutamyl-[protein] + NH4(+). In terms of biological role, involved in chemotaxis. Part of a chemotaxis signal transduction system that modulates chemotaxis in response to various stimuli. Catalyzes the demethylation of specific methylglutamate residues introduced into the chemoreceptors (methyl-accepting chemotaxis proteins or MCP) by CheR. Also mediates the irreversible deamidation of specific glutamine residues to glutamic acid. This Borreliella burgdorferi (strain ATCC 35210 / DSM 4680 / CIP 102532 / B31) (Borrelia burgdorferi) protein is Protein-glutamate methylesterase/protein-glutamine glutaminase.